A 431-amino-acid chain; its full sequence is Tryptophan synthase beta chain 2 (431 aa).

At Lys-111 the chain carries N6-(pyridoxal phosphate)lysine.

Belongs to the TrpB family. Tetramer of two alpha and two beta chains. Requires pyridoxal 5'-phosphate as cofactor.

The catalysed reaction is (1S,2R)-1-C-(indol-3-yl)glycerol 3-phosphate + L-serine = D-glyceraldehyde 3-phosphate + L-tryptophan + H2O. The protein operates within amino-acid biosynthesis; L-tryptophan biosynthesis; L-tryptophan from chorismate: step 5/5. Functionally, the beta subunit is responsible for the synthesis of L-tryptophan from indole and L-serine. This chain is Tryptophan synthase beta chain 2 (trpB2), found in Sulfurisphaera tokodaii (strain DSM 16993 / JCM 10545 / NBRC 100140 / 7) (Sulfolobus tokodaii).